A 372-amino-acid polypeptide reads, in one-letter code: Glutamate 5-kinase (372 aa).

Lys14 lines the ATP pocket. Residues Ser54, Asp141, and Asn153 each contribute to the substrate site. ATP is bound by residues 173-174 (TD) and 215-221 (TGGMITK). The PUA domain occupies 280-358 (AGRLLLDDGA…REIEAALGYI (79 aa)).

It belongs to the glutamate 5-kinase family.

The protein localises to the cytoplasm. The enzyme catalyses L-glutamate + ATP = L-glutamyl 5-phosphate + ADP. Its pathway is amino-acid biosynthesis; L-proline biosynthesis; L-glutamate 5-semialdehyde from L-glutamate: step 1/2. Its function is as follows. Catalyzes the transfer of a phosphate group to glutamate to form L-glutamate 5-phosphate. The sequence is that of Glutamate 5-kinase from Chromobacterium violaceum (strain ATCC 12472 / DSM 30191 / JCM 1249 / CCUG 213 / NBRC 12614 / NCIMB 9131 / NCTC 9757 / MK).